A 299-amino-acid polypeptide reads, in one-letter code: 4-hydroxy-tetrahydrodipicolinate synthase (299 aa).

Pyruvate is bound at residue T50. Catalysis depends on Y139, which acts as the Proton donor/acceptor. The active-site Schiff-base intermediate with substrate is K167. Residue V209 participates in pyruvate binding.

It belongs to the DapA family. As to quaternary structure, homotetramer; dimer of dimers.

It localises to the cytoplasm. It carries out the reaction L-aspartate 4-semialdehyde + pyruvate = (2S,4S)-4-hydroxy-2,3,4,5-tetrahydrodipicolinate + H2O + H(+). It functions in the pathway amino-acid biosynthesis; L-lysine biosynthesis via DAP pathway; (S)-tetrahydrodipicolinate from L-aspartate: step 3/4. Its function is as follows. Catalyzes the condensation of (S)-aspartate-beta-semialdehyde [(S)-ASA] and pyruvate to 4-hydroxy-tetrahydrodipicolinate (HTPA). This is 4-hydroxy-tetrahydrodipicolinate synthase from Synechococcus elongatus (strain ATCC 33912 / PCC 7942 / FACHB-805) (Anacystis nidulans R2).